Consider the following 243-residue polypeptide: Carboxy-S-adenosyl-L-methionine synthase (243 aa).

S-adenosyl-L-methionine-binding positions include Tyr40, 65-67, 90-91, 118-119, Asn133, and Arg200; these read GSS, DN, and DI.

Belongs to the class I-like SAM-binding methyltransferase superfamily. Cx-SAM synthase family. Homodimer.

The enzyme catalyses prephenate + S-adenosyl-L-methionine = carboxy-S-adenosyl-L-methionine + 3-phenylpyruvate + H2O. Catalyzes the conversion of S-adenosyl-L-methionine (SAM) to carboxy-S-adenosyl-L-methionine (Cx-SAM). This chain is Carboxy-S-adenosyl-L-methionine synthase, found in Shewanella frigidimarina (strain NCIMB 400).